The primary structure comprises 279 residues: Pantothenate synthetase (279 aa).

An ATP-binding site is contributed by 26–33 (MGNLHEGH). The active-site Proton donor is H33. Q57 serves as a coordination point for (R)-pantoate. Residue Q57 participates in beta-alanine binding. 144–147 (GKKD) serves as a coordination point for ATP. (R)-pantoate is bound at residue Q150. Residues V173 and 181–184 (LSSR) each bind ATP.

Belongs to the pantothenate synthetase family. As to quaternary structure, homodimer.

The protein localises to the cytoplasm. It carries out the reaction (R)-pantoate + beta-alanine + ATP = (R)-pantothenate + AMP + diphosphate + H(+). It participates in cofactor biosynthesis; (R)-pantothenate biosynthesis; (R)-pantothenate from (R)-pantoate and beta-alanine: step 1/1. Functionally, catalyzes the condensation of pantoate with beta-alanine in an ATP-dependent reaction via a pantoyl-adenylate intermediate. This Burkholderia ambifaria (strain ATCC BAA-244 / DSM 16087 / CCUG 44356 / LMG 19182 / AMMD) (Burkholderia cepacia (strain AMMD)) protein is Pantothenate synthetase.